The sequence spans 301 residues: RNA polymerase II holoenzyme cyclin-like subunit (301 aa).

The 90-residue stretch at 53 to 142 (QQLIKLGKRT…LGECEFALIS (90 aa)) folds into the Cyclin N-terminal domain.

It belongs to the cyclin family. Cyclin C subfamily. In terms of assembly, component of the srb8-11 complex, a regulatory module of the Mediator complex.

The protein resides in the nucleus. In terms of biological role, component of the srb8-11 complex. The srb8-11 complex is a regulatory module of the Mediator complex which is itself involved in regulation of basal and activated RNA polymerase II-dependent transcription. The srb8-11 complex may be involved in the transcriptional repression of a subset of genes regulated by Mediator. It may inhibit the association of the Mediator complex with RNA polymerase II to form the holoenzyme complex. The srb8-11 complex phosphorylates the C-terminal domain (CTD) of the largest subunit of RNA polymerase II. This is RNA polymerase II holoenzyme cyclin-like subunit (ssn8) from Aspergillus terreus (strain NIH 2624 / FGSC A1156).